The primary structure comprises 586 residues: MTLDFRNVNMLWSSIIAETLSRLGLTTAIICPGSRSGPLAVAFAQHPDIEAIPVLDERSAAFFGLGIARRKGLPVVLVCTSGTAGANFYPAVIEAEASGVPLLLLTADRPPELRHCQAGQAIDQVKLYGHYPRWQVELALPSTHPEMLAYLRQTCVYAWEQSQRPVPGPVHLNIPFRDPLAPISDLETESLAATFDIDQFFAAVHPLPSVQISLDLQTTNVYLDQWMSCDRGLIIAGPAQPDTPEHYCLAIAQLAHILGWPVLAEGLSPLRNWADRNSYLISTYDLILRNPTIASQLQPQQVISIGALPTSKVLRVWLTQSRAQTWVVDVSDHNMDPLHGLSIPVRISVEGLITSIPAAKKEHCQPLTAYAKSWLNANHSVRTLINRAMQKQSELIESKIAWLLSQILPPRTPLFIANSMPVRDIEYFWQPGTLHIQPYFNRGANGIDGTLSTALGMSHRQQSSVLLTGDLALLHDTNGFLLQDYWQGHLTIIVVNNGGGGIFQMLPISAFDPPFERFFRTPQQVQLKHLAATYQAKWTLIQSWAHLQQALNPLPESGLHILEISCDCQNDTQWRRIFFKECVKSL.

It belongs to the TPP enzyme family. MenD subfamily. Homodimer. Mg(2+) is required as a cofactor. Mn(2+) serves as cofactor. The cofactor is thiamine diphosphate.

It carries out the reaction isochorismate + 2-oxoglutarate + H(+) = 5-enolpyruvoyl-6-hydroxy-2-succinyl-cyclohex-3-ene-1-carboxylate + CO2. It participates in quinol/quinone metabolism; 1,4-dihydroxy-2-naphthoate biosynthesis; 1,4-dihydroxy-2-naphthoate from chorismate: step 2/7. Its pathway is cofactor biosynthesis; phylloquinone biosynthesis. Functionally, catalyzes the thiamine diphosphate-dependent decarboxylation of 2-oxoglutarate and the subsequent addition of the resulting succinic semialdehyde-thiamine pyrophosphate anion to isochorismate to yield 2-succinyl-5-enolpyruvyl-6-hydroxy-3-cyclohexene-1-carboxylate (SEPHCHC). The chain is 2-succinyl-5-enolpyruvyl-6-hydroxy-3-cyclohexene-1-carboxylate synthase from Acaryochloris marina (strain MBIC 11017).